The primary structure comprises 465 residues: Lactaldehyde dehydrogenase (465 aa).

220–225 (GSVEIG) contacts NAD(+). Residues Glu240 and Cys274 contribute to the active site.

This sequence belongs to the aldehyde dehydrogenase family. Homotetramer.

It catalyses the reaction (S)-lactaldehyde + NAD(+) + H2O = (S)-lactate + NADH + 2 H(+). The protein operates within cofactor biosynthesis; coenzyme F420 biosynthesis. Functionally, involved in F420 biosynthesis through the oxidation of lactaldehyde to lactate. In Methanococcus maripaludis (strain C7 / ATCC BAA-1331), this protein is Lactaldehyde dehydrogenase.